Here is a 391-residue protein sequence, read N- to C-terminus: Septation protein etd1 (391 aa).

Residues 49–68 (MKSYGSDITPRRPKQLGLPK) form a disordered region.

Functionally, involved in septation. The chain is Septation protein etd1 (etd1) from Schizosaccharomyces pombe (strain 972 / ATCC 24843) (Fission yeast).